The chain runs to 398 residues: Phosphoglycerate kinase (398 aa).

Residues 23–25 (DLN), Arg-38, 61–64 (HFGR), Arg-120, and Arg-153 contribute to the substrate site. ATP contacts are provided by residues Lys-203, Glu-325, and 355–358 (GGDT).

It belongs to the phosphoglycerate kinase family. In terms of assembly, monomer.

The protein localises to the cytoplasm. It catalyses the reaction (2R)-3-phosphoglycerate + ATP = (2R)-3-phospho-glyceroyl phosphate + ADP. Its pathway is carbohydrate degradation; glycolysis; pyruvate from D-glyceraldehyde 3-phosphate: step 2/5. The sequence is that of Phosphoglycerate kinase from Chelativorans sp. (strain BNC1).